The following is a 217-amino-acid chain: GTP cyclohydrolase 1 (217 aa).

Cysteine 109, histidine 112, and cysteine 180 together coordinate Zn(2+).

Belongs to the GTP cyclohydrolase I family. As to quaternary structure, toroid-shaped homodecamer, composed of two pentamers of five dimers.

The enzyme catalyses GTP + H2O = 7,8-dihydroneopterin 3'-triphosphate + formate + H(+). It participates in cofactor biosynthesis; 7,8-dihydroneopterin triphosphate biosynthesis; 7,8-dihydroneopterin triphosphate from GTP: step 1/1. This chain is GTP cyclohydrolase 1, found in Vibrio campbellii (strain ATCC BAA-1116).